A 1142-amino-acid polypeptide reads, in one-letter code: Auxin response factor 5 (1142 aa).

The segment at residues 148-250 (FCKTLTASDT…QLLLGIRRAN (103 aa)) is a DNA-binding region (TF-B3). Residues 1009 to 1093 (RTFTKVYKRG…RCIRILSPQE (85 aa)) enclose the PB1 domain. The disordered stretch occupies residues 1114 to 1142 (SSSDGVNGWRPRCDQNPGNPSIGPYDQFE).

This sequence belongs to the ARF family. As to quaternary structure, homodimers and heterodimers. As to expression, expressed in roots, culms, leaves and young panicles.

Its subcellular location is the nucleus. Functionally, auxin response factors (ARFs) are transcriptional factors that bind specifically to the DNA sequence 5'-TGTCTC-3' found in the auxin-responsive promoter elements (AuxREs). This Oryza sativa subsp. japonica (Rice) protein is Auxin response factor 5 (ARF5).